Consider the following 1074-residue polypeptide: Probable arabinosyltransferase C (1074 aa).

10 consecutive transmembrane segments (helical) span residues 15-37 (ARLVAIIAGLLGTLMAIATPLLP), 214-236 (LLKLLAMIVGVAMTVIALGALHV), 251-273 (SRWWSMTPLDGLVSAMLVWWHFV), 415-437 (IIIGALTLFSGPTGIAAVGALLV), 452-474 (RFGYWALLAPIAAAGTVTIFLIF), 516-538 (SVARRFAVLTLLLALAVSIAMTL), 573-595 (THQFGVFAGLAGCLGALAAVAVT), 608-630 (FGAAVLFVTALSFATVNGWWYVS), 645-667 (FGFTTMLLGLSVLALLVAAWFHF), and 684-706 (LLVAPLAVATWALVIFEVVSLTL).

Belongs to the emb family.

It localises to the cell membrane. In terms of biological role, arabinosyl transferase responsible for the polymerization of arabinose into the arabinan of arabinogalactan. This is Probable arabinosyltransferase C (embC) from Mycolicibacterium smegmatis (Mycobacterium smegmatis).